Here is a 384-residue protein sequence, read N- to C-terminus: Probable peptidoglycan glycosyltransferase FtsW (384 aa).

At 1–19 (MAAVWRWFVPERPSFYDRG) the chain is on the cytoplasmic side. A helical transmembrane segment spans residues 20-40 (LLALTFSLMGIGLMMVASASI). Over 41–54 (KEGPGGDMFYFTKR) the chain is Periplasmic. A helical membrane pass occupies residues 55-75 (HLIFLFVCLGIGVGTLYLPLE). Residues 76–83 (RWREWSGR) lie on the Cytoplasmic side of the membrane. A helical transmembrane segment spans residues 84–104 (LLVGALGLLFAVLAVGRTVNG). Topologically, residues 105-110 (AKRWIG) are periplasmic. A helical membrane pass occupies residues 111 to 131 (FGFFNIQPAELAKLALIVFIA). The Cytoplasmic portion of the chain corresponds to 132–143 (SYLVRRSDEVRG). A helical membrane pass occupies residues 144–164 (NIAGFVKPLAVVFLLAIMLLA). The Periplasmic segment spans residues 165–166 (QP). Residues 167–187 (DLGSVVVLFVCTFGLLFIGGA) form a helical membrane-spanning segment. Position 188 (lysine 188) is a topological domain, cytoplasmic. A helical membrane pass occupies residues 189-209 (LVQFIAIIVAGLSALAGLIIY). At 210–267 (EPYRLRRVTSFLDPWADPFGSGYQLTQSLMAFGRGGFFGQGLGNSVQKLSYLPEAHTD) the chain is on the periplasmic side. Residues 268–288 (FVFAILGEELGYFGVLVVLFL) form a helical membrane-spanning segment. Residues 289 to 316 (QLLLAMKALQIGRTALLRSKFFEGYMAC) are Cytoplasmic-facing. A helical transmembrane segment spans residues 317–337 (GIGIWFSFQTVVNVGAAAGML). Topologically, residues 338–343 (PTKGLT) are periplasmic. The helical transmembrane segment at 344–364 (LPLVSYGGSSLIAITMAVAIL) threads the bilayer. Residues 365–384 (LRIDFERRLDTSHVIQREAA) lie on the Cytoplasmic side of the membrane.

The protein belongs to the SEDS family. FtsW subfamily.

Its subcellular location is the cell inner membrane. The enzyme catalyses [GlcNAc-(1-&gt;4)-Mur2Ac(oyl-L-Ala-gamma-D-Glu-L-Lys-D-Ala-D-Ala)](n)-di-trans,octa-cis-undecaprenyl diphosphate + beta-D-GlcNAc-(1-&gt;4)-Mur2Ac(oyl-L-Ala-gamma-D-Glu-L-Lys-D-Ala-D-Ala)-di-trans,octa-cis-undecaprenyl diphosphate = [GlcNAc-(1-&gt;4)-Mur2Ac(oyl-L-Ala-gamma-D-Glu-L-Lys-D-Ala-D-Ala)](n+1)-di-trans,octa-cis-undecaprenyl diphosphate + di-trans,octa-cis-undecaprenyl diphosphate + H(+). It participates in cell wall biogenesis; peptidoglycan biosynthesis. Its function is as follows. Peptidoglycan polymerase that is essential for cell division. This is Probable peptidoglycan glycosyltransferase FtsW from Tolumonas auensis (strain DSM 9187 / NBRC 110442 / TA 4).